The chain runs to 99 residues: DNA-directed RNA polymerase subunit omega (99 aa).

This sequence belongs to the RNA polymerase subunit omega family. As to quaternary structure, the RNAP catalytic core consists of 2 alpha, 1 beta, 1 beta' and 1 omega subunit. When a sigma factor is associated with the core the holoenzyme is formed, which can initiate transcription.

The catalysed reaction is RNA(n) + a ribonucleoside 5'-triphosphate = RNA(n+1) + diphosphate. Promotes RNA polymerase assembly. Latches the N- and C-terminal regions of the beta' subunit thereby facilitating its interaction with the beta and alpha subunits. This Deinococcus radiodurans (strain ATCC 13939 / DSM 20539 / JCM 16871 / CCUG 27074 / LMG 4051 / NBRC 15346 / NCIMB 9279 / VKM B-1422 / R1) protein is DNA-directed RNA polymerase subunit omega (rpoZ).